Reading from the N-terminus, the 390-residue chain is 3-ketoacyl-CoA thiolase (390 aa).

The active-site Acyl-thioester intermediate is the C95. Catalysis depends on proton acceptor residues H346 and C376.

Belongs to the thiolase-like superfamily. Thiolase family. As to quaternary structure, heterotetramer of two alpha chains (FadB) and two beta chains (FadA).

It localises to the cytoplasm. The catalysed reaction is an acyl-CoA + acetyl-CoA = a 3-oxoacyl-CoA + CoA. It functions in the pathway lipid metabolism; fatty acid beta-oxidation. Catalyzes the final step of fatty acid oxidation in which acetyl-CoA is released and the CoA ester of a fatty acid two carbons shorter is formed. This is 3-ketoacyl-CoA thiolase from Psychrobacter sp. (strain PRwf-1).